Here is a 307-residue protein sequence, read N- to C-terminus: Phosphoribosylaminoimidazole-succinocarboxamide synthase (307 aa).

Belongs to the SAICAR synthetase family.

It catalyses the reaction 5-amino-1-(5-phospho-D-ribosyl)imidazole-4-carboxylate + L-aspartate + ATP = (2S)-2-[5-amino-1-(5-phospho-beta-D-ribosyl)imidazole-4-carboxamido]succinate + ADP + phosphate + 2 H(+). Its pathway is purine metabolism; IMP biosynthesis via de novo pathway; 5-amino-1-(5-phospho-D-ribosyl)imidazole-4-carboxamide from 5-amino-1-(5-phospho-D-ribosyl)imidazole-4-carboxylate: step 1/2. The chain is Phosphoribosylaminoimidazole-succinocarboxamide synthase from Thermobifida fusca (strain YX).